We begin with the raw amino-acid sequence, 176 residues long: Flavodoxin 1 (176 aa).

Residues 4–165 (HGIFFGSDTG…RVEKWVKQIS (162 aa)) enclose the Flavodoxin-like domain.

Belongs to the flavodoxin family. FMN serves as cofactor.

Low-potential electron donor to a number of redox enzymes. This chain is Flavodoxin 1 (fldA), found in Shigella flexneri.